The sequence spans 188 residues: Defensin-like protein 99 (188 aa).

The first 28 residues, 1–28, serve as a signal peptide directing secretion; sequence MGSLKLSTVVVTALVVCLSILLISPTEA. 7 disulfide bridges follow: Cys-37-Cys-95, Cys-45-Cys-77, Cys-58-Cys-92, Cys-62-Cys-94, Cys-123-Cys-178, Cys-137-Cys-175, and Cys-141-Cys-177.

It belongs to the DEFL family.

It is found in the secreted. The sequence is that of Defensin-like protein 99 from Arabidopsis thaliana (Mouse-ear cress).